Consider the following 207-residue polypeptide: ATP-dependent dethiobiotin synthetase BioD (207 aa).

Asp11–Phe16 contributes to the ATP binding site. Thr15 provides a ligand contact to Mg(2+). Lys31 is an active-site residue. Ser35 contributes to the substrate binding site. Residues Asp42, Glu95–Gly98, and Asn155–Gln156 each bind ATP. 2 residues coordinate Mg(2+): Asp42 and Glu95.

This sequence belongs to the dethiobiotin synthetase family. As to quaternary structure, homodimer. Mg(2+) serves as cofactor.

It is found in the cytoplasm. It carries out the reaction (7R,8S)-7,8-diammoniononanoate + CO2 + ATP = (4R,5S)-dethiobiotin + ADP + phosphate + 3 H(+). It participates in cofactor biosynthesis; biotin biosynthesis; biotin from 7,8-diaminononanoate: step 1/2. Functionally, catalyzes a mechanistically unusual reaction, the ATP-dependent insertion of CO2 between the N7 and N8 nitrogen atoms of 7,8-diaminopelargonic acid (DAPA, also called 7,8-diammoniononanoate) to form a ureido ring. The chain is ATP-dependent dethiobiotin synthetase BioD from Chlamydia abortus (strain DSM 27085 / S26/3) (Chlamydophila abortus).